Consider the following 121-residue polypeptide: Large ribosomal subunit protein uL14 (121 aa).

It belongs to the universal ribosomal protein uL14 family. In terms of assembly, part of the 50S ribosomal subunit. Forms a cluster with proteins L3 and L19. In the 70S ribosome, L14 and L19 interact and together make contacts with the 16S rRNA in bridges B5 and B8.

In terms of biological role, binds to 23S rRNA. Forms part of two intersubunit bridges in the 70S ribosome. This is Large ribosomal subunit protein uL14 from Synechococcus sp. (strain WH7803).